Reading from the N-terminus, the 419-residue chain is eIF5-mimic protein 2 (419 aa).

At Met-1 the chain carries N-acetylmethionine. Residues 1 to 15 are compositionally biased toward polar residues; the sequence is MNNQKQQKPTLSGQR. Residues 1–26 are disordered; that stretch reads MNNQKQQKPTLSGQRFKTRKRDEKER. Phosphoserine is present on Ser-12. In terms of domain architecture, W2 spans 247-414; the sequence is NQQTIGARKE…KNAEEESESE (168 aa). Residue Lys-368 forms a Glycyl lysine isopeptide (Lys-Gly) (interchain with G-Cter in SUMO2) linkage. Phosphoserine occurs at positions 411 and 413.

The protein belongs to the BZW family.

Translation initiation regulator which represses repeat-associated non-AUG (RAN) initiated translation probably by acting as a competitive inhibitor of eukaryotic translation initiation factor 5 (EIF5) function. Enhances histone H4 gene transcription but does not seem to bind DNA directly. This Pongo abelii (Sumatran orangutan) protein is eIF5-mimic protein 2 (BZW1).